Consider the following 208-residue polypeptide: Octanoyltransferase (208 aa).

Residues 30–208 (GTASEAVFIL…ILKQEFYKIF (179 aa)) enclose the BPL/LPL catalytic domain. Residues 69–76 (RGGKFTYH), 142–144 (SIG), and 155–157 (GVA) each bind substrate. The active-site Acyl-thioester intermediate is C173.

Belongs to the LipB family.

It localises to the cytoplasm. It carries out the reaction octanoyl-[ACP] + L-lysyl-[protein] = N(6)-octanoyl-L-lysyl-[protein] + holo-[ACP] + H(+). Its pathway is protein modification; protein lipoylation via endogenous pathway; protein N(6)-(lipoyl)lysine from octanoyl-[acyl-carrier-protein]: step 1/2. Functionally, catalyzes the transfer of endogenously produced octanoic acid from octanoyl-acyl-carrier-protein onto the lipoyl domains of lipoate-dependent enzymes. Lipoyl-ACP can also act as a substrate although octanoyl-ACP is likely to be the physiological substrate. This is Octanoyltransferase from Orientia tsutsugamushi (strain Boryong) (Rickettsia tsutsugamushi).